The chain runs to 443 residues: Gasdermin-A2 (443 aa).

The segment at 1-249 (MSMFEDVTRA…QGSTVQMISG (249 aa)) is triggers pyroptosis. 9–13 (RALAR) provides a ligand contact to a cardiolipin. Beta stranded transmembrane passes span 78–95 (NFSF…DVEV), 99–120 (MKVK…MLSV), 164–179 (VTLK…FSLN), and 183–197 (LGLQ…AVTI). Residues 249 to 312 (GEMHEDFKTL…GALDKGHEVT (64 aa)) adopt a coiled-coil conformation.

It belongs to the gasdermin family. In terms of assembly, homooligomer; homooligomeric ring-shaped pore complex containing 18-36 subunits when inserted in the membrane. Cleavage relieves autoinhibition by releasing the N-terminal moiety (Gasdermin-A2, N-terminal) that initiates pyroptosis. In contrast to Gsdma, not cleaved by bacterial effector protein SpeB. Post-translationally, palmitoylated. Expressed in the gastrointestinal tract, specifically from the middle to the upper region of the gastric mucosa in the glandular stomach.

It is found in the cytoplasm. The protein localises to the perinuclear region. It localises to the cytosol. The protein resides in the cell membrane. With respect to regulation, the full-length protein before cleavage is inactive: intramolecular interactions between N- and C-terminal domains mediate autoinhibition in the absence of activation signal. The intrinsic pyroptosis-inducing activity is carried by the released N-terminal moiety (Gasdermin-A2, N-terminal). Its function is as follows. This form constitutes the precursor of the pore-forming protein and acts as a sensor of infection: upon bacterial infection, specifically cleaved by some bacterial effector protein, releasing the N-terminal moiety (Gasdermin-A2, N-terminal) that binds to membranes and forms pores, triggering pyroptosis. In terms of biological role, pore-forming protein that causes membrane permeabilization and pyroptosis. Released upon cleavage of Gasdermin-A2, and binds to membrane inner leaflet lipids. Homooligomerizes within the membrane and forms pores of 10-15 nanometers (nm) of inner diameter, triggering pyroptosis. Binds to membrane inner leaflet lipids, such as phosphatidylinositol (4,5)-bisphosphate. The polypeptide is Gasdermin-A2 (Mus musculus (Mouse)).